Consider the following 853-residue polypeptide: MSAIENFDAHTPMMQQYLKLKAQHPEILLFYRMGDFYELFYDDAKRASQLLDISLTKRGASAGEPIPMAGIPYHAVENYLAKLVNQGESVAICEQIGDPATSKGPVERKVVRIVTPGTISDEALLQERQDNLLAAIWQDSKGFGYATLDISSGRFRLSEPADRETMAAELQRTNPAELLYAEDFAEMSLIEGRRGLRRRPLWEFEIDTARQQLNLQFGTRDLVGFGVENAPRGLCAAGCLLQYAKDTQRTTLPHIRSITMEREQDSIIMDAATRRNLEITQNLAGGAENTLASVLDCTVTPMGSRMLKRWLHMPVRDTRVLLERQQTIGALQDFTAELQPVLRQVGDLERILARLALRTARPRDLARMRHAFQQLPELRAQLETVDSAPVQALREKMGEFAELRDLLERAIIDTPPVLVRDGGVIASGYNEELDEWRALADGATDYLERLEVRERERTGLDTLKVGFNAVHGYYIQISRGQSHLAPINYMRRQTLKNAERYIIPELKEYEDKVLTSKGKALALEKQLYEELFDLLLPHLEALQQSASALAELDVLVNLAERAYTLNYICPTFIDKPGIRITEGRHPVVEQVLNEPFIANPLNLSPQRRMLIITGPNMGGKSTYMRQTALIALMAYIGSYVPAQKVEIGPIDRIFTRVGAADDLASGRSTFMVEMTETANILHNATEYSLVLMDEIGRGTSTYDGLSLAWACAENLANKIKALTLFATHYFELTQLPEKMEGVANVHLDALEHGDTIAFMHSVQDGAASKSYGLAVAALAGVPKEVIKRARQKLRELESISPNAAATQVDGTQMSLLSVPEETSPAVEALENLDPDSLTPRQALEWIYRLKSLV.

An ATP-binding site is contributed by 614–621; that stretch reads GPNMGGKS.

Belongs to the DNA mismatch repair MutS family.

Its function is as follows. This protein is involved in the repair of mismatches in DNA. It is possible that it carries out the mismatch recognition step. This protein has a weak ATPase activity. This is DNA mismatch repair protein MutS from Escherichia coli (strain SE11).